The primary structure comprises 2541 residues: Talin-1 (2541 aa).

An FERM domain is found at Arg86 to Lys403. An interaction with LAYN region spans residues Phe280 to Gln435. Residues Arg482–Ile655 form a helical bundle R1 region. Positions Gly656–Lys786 are helical bundle R2. Residues Gln787 to Lys911 form a helical bundle R3 region. The interval Leu913–Ala1043 is helical bundle R4. Positions Gly1045–Gln1205 are helical bundle R5. The segment at Arg1206 to Ala1356 is helical bundle R6. The helical bundle R7A stretch occupies residues Pro1357–Asn1452. The interval Gly1358 to Arg1658 is interaction with VCL and F-actin. Positions Leu1460–Glu1579 are helical bundle R8. A glycan (O-linked (GlcNAc) threonine) is linked at Thr1486. Residues Phe1580–Asp1652 form a helical bundle R7B region. Positions Ala1654–Gly1821 are helical bundle R9. The segment at Val1822 to Arg1972 is helical bundle R10. O-linked (GlcNAc) threonine glycosylation is present at Thr1889. The segment at Gly1973–Thr2139 is helical bundle R11. Residues Lys2140–Glu2293 form a helical bundle R12 region. The I/LWEQ domain occupies Thr2292–Leu2531. Residues Asp2299–Asp2481 form a helical bundle R13 region.

Interacts with PIP5K1C and NRAP. Binds with high affinity to vinculin VCL and with low affinity to integrins. Interacts with APBB1IP; this inhibits VCL binding. Interacts with F-actin. Interacts with LAYN. Interacts with THSD1. Phosphorylated.

It localises to the cell projection. It is found in the ruffle membrane. The protein localises to the cytoplasm. Its subcellular location is the cytoskeleton. The protein resides in the cell surface. It localises to the cell junction. It is found in the focal adhesion. Functionally, high molecular weight cytoskeletal protein concentrated at regions of cell-substratum contact and, in lymphocytes, at cell-cell contacts. Involved in connections of major cytoskeletal structures to the plasma membrane. The sequence is that of Talin-1 (TLN1) from Gallus gallus (Chicken).